Consider the following 448-residue polypeptide: UDP-glycosyltransferase 79B5 (448 aa).

UDP-alpha-D-glucose-binding positions include Thr261, Leu320 to Gln322, His337 to Glu345, and Leu359 to Gln362.

It belongs to the UDP-glycosyltransferase family.

The chain is UDP-glycosyltransferase 79B5 (UGT79B5) from Arabidopsis thaliana (Mouse-ear cress).